The sequence spans 521 residues: Manganese transporter pdt1 (521 aa).

S42 carries the phosphoserine modification. T43 carries the post-translational modification Phosphothreonine. The next 12 membrane-spanning stretches (helical) occupy residues 71–91 (YCKF…PGNY), 104–124 (KLLF…SLCI), 152–172 (VLAE…TAVA), 179–199 (IPLV…LIAW), 210–230 (IFET…AVVL), 233–253 (VHIG…TVFS), 260–280 (SIGI…SGLV), 325–345 (LFTF…AVFY), 373–393 (LFAV…TIAG), 417–437 (IAII…LNQV), 440–460 (ASQV…VMFT), and 495–515 (IVTW…IVWL).

This sequence belongs to the NRAMP family.

It is found in the endoplasmic reticulum membrane. In terms of biological role, transports manganese ions into the cell. Regulates cell morphogenesis through control of manganese homeostasis. The polypeptide is Manganese transporter pdt1 (pdt1) (Schizosaccharomyces pombe (strain 972 / ATCC 24843) (Fission yeast)).